Here is a 427-residue protein sequence, read N- to C-terminus: Serine--tRNA ligase (427 aa).

An L-serine-binding site is contributed by T230–E232. R261 to E263 provides a ligand contact to ATP. E284 is a binding site for L-serine. E348–S351 serves as a coordination point for ATP. Residue S384 coordinates L-serine.

It belongs to the class-II aminoacyl-tRNA synthetase family. Type-1 seryl-tRNA synthetase subfamily. As to quaternary structure, homodimer. The tRNA molecule binds across the dimer.

It is found in the cytoplasm. It catalyses the reaction tRNA(Ser) + L-serine + ATP = L-seryl-tRNA(Ser) + AMP + diphosphate + H(+). It carries out the reaction tRNA(Sec) + L-serine + ATP = L-seryl-tRNA(Sec) + AMP + diphosphate + H(+). It participates in aminoacyl-tRNA biosynthesis; selenocysteinyl-tRNA(Sec) biosynthesis; L-seryl-tRNA(Sec) from L-serine and tRNA(Sec): step 1/1. Catalyzes the attachment of serine to tRNA(Ser). Is also able to aminoacylate tRNA(Sec) with serine, to form the misacylated tRNA L-seryl-tRNA(Sec), which will be further converted into selenocysteinyl-tRNA(Sec). This Desulforapulum autotrophicum (strain ATCC 43914 / DSM 3382 / VKM B-1955 / HRM2) (Desulfobacterium autotrophicum) protein is Serine--tRNA ligase.